Here is a 187-residue protein sequence, read N- to C-terminus: UPF0301 protein Sala_0165 (187 aa).

Belongs to the UPF0301 (AlgH) family.

This Sphingopyxis alaskensis (strain DSM 13593 / LMG 18877 / RB2256) (Sphingomonas alaskensis) protein is UPF0301 protein Sala_0165.